The following is a 35-amino-acid chain: Photosystem II reaction center protein T (35 aa).

The helical transmembrane segment at 3–23 threads the bilayer; it reads ALVYTFLLVSTLGIIFFAIFF.

Belongs to the PsbT family. PSII is composed of 1 copy each of membrane proteins PsbA, PsbB, PsbC, PsbD, PsbE, PsbF, PsbH, PsbI, PsbJ, PsbK, PsbL, PsbM, PsbT, PsbY, PsbZ, Psb30/Ycf12, at least 3 peripheral proteins of the oxygen-evolving complex and a large number of cofactors. It forms dimeric complexes.

Its subcellular location is the plastid. It is found in the chloroplast thylakoid membrane. In terms of biological role, found at the monomer-monomer interface of the photosystem II (PS II) dimer, plays a role in assembly and dimerization of PSII. PSII is a light-driven water plastoquinone oxidoreductase, using light energy to abstract electrons from H(2)O, generating a proton gradient subsequently used for ATP formation. The polypeptide is Photosystem II reaction center protein T (Pisum sativum (Garden pea)).